The following is a 166-amino-acid chain: NAD(P)H-quinone oxidoreductase subunit I, chloroplastic (166 aa).

4Fe-4S ferredoxin-type domains are found at residues 55-84 (GRIH…VDWK) and 95-124 (LNYS…MTEE). 8 residues coordinate [4Fe-4S] cluster: Cys64, Cys67, Cys70, Cys74, Cys104, Cys107, Cys110, and Cys114.

Belongs to the complex I 23 kDa subunit family. In terms of assembly, NDH is composed of at least 16 different subunits, 5 of which are encoded in the nucleus. The cofactor is [4Fe-4S] cluster.

The protein resides in the plastid. The protein localises to the chloroplast thylakoid membrane. The enzyme catalyses a plastoquinone + NADH + (n+1) H(+)(in) = a plastoquinol + NAD(+) + n H(+)(out). It carries out the reaction a plastoquinone + NADPH + (n+1) H(+)(in) = a plastoquinol + NADP(+) + n H(+)(out). In terms of biological role, NDH shuttles electrons from NAD(P)H:plastoquinone, via FMN and iron-sulfur (Fe-S) centers, to quinones in the photosynthetic chain and possibly in a chloroplast respiratory chain. The immediate electron acceptor for the enzyme in this species is believed to be plastoquinone. Couples the redox reaction to proton translocation, and thus conserves the redox energy in a proton gradient. The sequence is that of NAD(P)H-quinone oxidoreductase subunit I, chloroplastic from Chaenactis santolinoides (Santolina pincushion).